A 481-amino-acid polypeptide reads, in one-letter code: Guanine nucleotide exchange factor C9orf72 (481 aa).

Residues 23 to 194 form the uDENN C9ORF72-type domain; sequence SPLLAATFAY…ELLSSMKSHS (172 aa). The cDENN C9ORF72-type domain occupies 200–343; sequence DIADTVLNDD…SELTAFWRAT (144 aa). Residues 370 to 464 form the dDENN C9ORF72-type domain; that stretch reads VLHRDTLVKA…IKPGLHSFIF (95 aa). The required for the homodimerization of the C9orf72-SMCR8 complex stretch occupies residues 461–481; that stretch reads SFIFGRPFYTSVQERDVLMTF.

Component of the C9orf72-SMCR8 complex, at least composed of C9orf72, SMCR8 and WDR41. The complex is formed of two protomers, each individually consisting of one molecule each of C9orf72, SMCR8 and WDR41. The protomers homodimerize via an interaction between C9orf72 (via C-terminus) and SMCR8 (via N-terminus). Within each protomer SMCR8 (via DENN domain) acts as a bridging protein between WDR41 (via C-terminus and N-terminus) and C9orf72 (via C-terminus). The C9orf72-SMCR8 complex associates with the ULK1/ATG1 kinase complex. Interacts with ULK1/ATG1 kinase complex members ULK1, ATG13 and RB1CC1. Interacts with SMCR8; the interaction is direct. Interacts with HNRNPA1, HNRNPA2B1 and UBQLN2. Interacts with small Rab GTPase RAB1A; the interaction mediates recruitment of RAB1A to the ULK1/ATG1 kinase complex. Also interacts with small Rab GTPase RAB7A. Interacts with cofilin. Interacts with GTP-binding proteins ARF1 and ARF6. Interacts with the DLG4/PSD-95. Interacts with CARM1 (via PH domain-like fold). Interacts with RAB39A and RAB39B (in GDP-bound forms); functions as GEF for RAB39A and RAB39B. In terms of tissue distribution, both isoforms are widely expressed, including kidney, lung, liver, heart, testis and several brain regions, such as cerebellum. Also expressed in the frontal cortex and in lymphoblasts (at protein level).

It is found in the cytoplasm. Its subcellular location is the nucleus. It localises to the P-body. The protein localises to the stress granule. The protein resides in the endosome. It is found in the lysosome. Its subcellular location is the cytoplasmic vesicle. It localises to the autophagosome. The protein localises to the autolysosome. The protein resides in the secreted. It is found in the cell projection. Its subcellular location is the axon. It localises to the growth cone. The protein localises to the perikaryon. The protein resides in the dendrite. It is found in the presynapse. Its subcellular location is the postsynapse. It localises to the nucleus membrane. Its function is as follows. Acts as a guanine-nucleotide releasing factor (GEF) for Rab GTPases by promoting the conversion of inactive RAB-GDP to the active form RAB-GTP. Acts as a GEF for RAB39A which enables HOPS-mediated autophagosome-lysosome membrane tethering and fusion in mammalian autophagy. Component of the C9orf72-SMCR8 complex where both subunits display GEF activity and that regulates autophagy. As part of the C9orf72-SMCR8-WDR41 (CSW) complex, functions as GEF for RAB8A and RAB39B, thereby promoting autophagosome maturation. As part of the C9orf72-SMCR8 complex, also functions as GTPase activating protein (GAP) for RAB8A and RAB11A in vitro. The C9orf72-SMCR8 complex also acts as a regulator of autophagy initiation by interacting with the ULK1/ATG1 kinase complex and modulating its protein kinase activity. Promotes initiation of autophagy by regulating the RAB1A-dependent trafficking of the ULK1/ATG1 kinase complex to the phagophore which leads to autophagosome formation. Acts as a regulator of mTORC1 signaling by promoting phosphorylation of mTORC1 substrates. Plays a role in endosomal trafficking. May be involved in regulating the maturation of phagosomes to lysosomes. Promotes the lysosomal localization and lysosome-mediated degradation of CARM1 which leads to inhibition of starvation-induced lipid metabolism. Regulates actin dynamics in motor neurons by inhibiting the GTP-binding activity of ARF6, leading to ARF6 inactivation. This reduces the activity of the LIMK1 and LIMK2 kinases which are responsible for phosphorylation and inactivation of cofilin, leading to CFL1/cofilin activation. Positively regulates axon extension and axon growth cone size in spinal motor neurons. Required for SMCR8 protein expression and localization at pre- and post-synaptic compartments in the forebrain, also regulates protein abundance of RAB3A and GRIA1/GLUR1 in post-synaptic compartments in the forebrain and hippocampus. Plays a role within the hematopoietic system in restricting inflammation and the development of autoimmunity. Regulates stress granule assembly in response to cellular stress. Functionally, does not play a role in regulation of stress granule assembly in response to cellular stress. The polypeptide is Guanine nucleotide exchange factor C9orf72 (Homo sapiens (Human)).